The chain runs to 30 residues: Cyclotide hyen-C (30 aa).

The segment at residues 1 to 30 is a cross-link (cyclopeptide (Gly-Asn)); sequence GTHPCQETCVTSTRCSTQGCHCNWPICFKN. Intrachain disulfides connect Cys5/Cys20, Cys9/Cys22, and Cys15/Cys27.

This is a cyclic peptide. As to expression, detected in stems (at protein level).

Functionally, probably participates in a plant defense mechanism. Does not display any cytotoxic activity towards K562, HeLa, MCF-7, HUVEC or red blood cells. Does not bind to phospholipd membranes containing 1-palmitoyl 2-oleoyl phosphatidylcholine (POPC) or 1-palmitoyl-2-oleophosphatidylethanolamine (POPE). In Pigea enneasperma (Spade flower), this protein is Cyclotide hyen-C.